The primary structure comprises 893 residues: Alanine--tRNA ligase (893 aa).

The Zn(2+) site is built by histidine 575, histidine 579, cysteine 677, and histidine 681.

This sequence belongs to the class-II aminoacyl-tRNA synthetase family. It depends on Zn(2+) as a cofactor.

Its subcellular location is the cytoplasm. The catalysed reaction is tRNA(Ala) + L-alanine + ATP = L-alanyl-tRNA(Ala) + AMP + diphosphate. Catalyzes the attachment of alanine to tRNA(Ala) in a two-step reaction: alanine is first activated by ATP to form Ala-AMP and then transferred to the acceptor end of tRNA(Ala). Also edits incorrectly charged Ser-tRNA(Ala) and Gly-tRNA(Ala) via its editing domain. In Synechococcus sp. (strain CC9311), this protein is Alanine--tRNA ligase.